The following is a 284-amino-acid chain: NAD/NADP-dependent indole-3-acetaldehyde reductase (284 aa).

Asp-49 provides a ligand contact to NADPH. Residues Tyr-54 and His-109 each act as proton donor in the active site. NADPH is bound by residues Ser-143, Gln-165, Leu-196, Arg-201, Thr-239, Thr-240, Thr-241, Ser-242, Lys-243, and Arg-246.

This sequence belongs to the aldo/keto reductase family. In terms of assembly, monomer.

It is found in the cytoplasm. The protein localises to the nucleus. The enzyme catalyses indole-3-ethanol + NAD(+) = indole-3-acetaldehyde + NADH + H(+). The catalysed reaction is indole-3-ethanol + NADP(+) = indole-3-acetaldehyde + NADPH + H(+). The polypeptide is NAD/NADP-dependent indole-3-acetaldehyde reductase (Schizosaccharomyces pombe (strain 972 / ATCC 24843) (Fission yeast)).